We begin with the raw amino-acid sequence, 622 residues long: DNA-directed RNA polymerase subunit gamma (622 aa).

Zn(2+)-binding residues include Cys70, Cys72, Cys85, and Cys88. Mg(2+)-binding residues include Asp466, Asp468, and Asp470.

Belongs to the RNA polymerase beta' chain family. RpoC1 subfamily. In terms of assembly, in cyanobacteria the RNAP catalytic core is composed of 2 alpha, 1 beta, 1 beta', 1 gamma and 1 omega subunit. When a sigma factor is associated with the core the holoenzyme is formed, which can initiate transcription. Mg(2+) serves as cofactor. It depends on Zn(2+) as a cofactor.

The catalysed reaction is RNA(n) + a ribonucleoside 5'-triphosphate = RNA(n+1) + diphosphate. DNA-dependent RNA polymerase catalyzes the transcription of DNA into RNA using the four ribonucleoside triphosphates as substrates. The chain is DNA-directed RNA polymerase subunit gamma from Cyanothece sp. (strain PCC 7425 / ATCC 29141).